A 255-amino-acid chain; its full sequence is Isoprenyl transferase (255 aa).

Residue Asp35 is part of the active site. Asp35 contacts Mg(2+). Residues 36-39, Trp40, Arg48, His52, and 80-82 each bind substrate; these read GNGR and STE. Asn83 serves as the catalytic Proton acceptor. Substrate-binding positions include Trp84, Arg86, Arg203, and 209-211; that span reads RIS. Mg(2+) is bound at residue Glu222.

The protein belongs to the UPP synthase family. In terms of assembly, homodimer. Mg(2+) is required as a cofactor.

Functionally, catalyzes the condensation of isopentenyl diphosphate (IPP) with allylic pyrophosphates generating different type of terpenoids. This is Isoprenyl transferase from Clostridium tetani (strain Massachusetts / E88).